Reading from the N-terminus, the 434-residue chain is ATP-dependent protease ATPase subunit HslU (434 aa).

Residues V18, 60–65 (GVGKTE), D247, E312, and R384 each bind ATP.

This sequence belongs to the ClpX chaperone family. HslU subfamily. As to quaternary structure, a double ring-shaped homohexamer of HslV is capped on each side by a ring-shaped HslU homohexamer. The assembly of the HslU/HslV complex is dependent on binding of ATP.

The protein localises to the cytoplasm. Functionally, ATPase subunit of a proteasome-like degradation complex; this subunit has chaperone activity. The binding of ATP and its subsequent hydrolysis by HslU are essential for unfolding of protein substrates subsequently hydrolyzed by HslV. HslU recognizes the N-terminal part of its protein substrates and unfolds these before they are guided to HslV for hydrolysis. This chain is ATP-dependent protease ATPase subunit HslU, found in Rhodopseudomonas palustris (strain BisB18).